Consider the following 397-residue polypeptide: Tryptophan synthase beta chain (397 aa).

At lysine 91 the chain carries N6-(pyridoxal phosphate)lysine.

This sequence belongs to the TrpB family. In terms of assembly, tetramer of two alpha and two beta chains. It depends on pyridoxal 5'-phosphate as a cofactor.

It carries out the reaction (1S,2R)-1-C-(indol-3-yl)glycerol 3-phosphate + L-serine = D-glyceraldehyde 3-phosphate + L-tryptophan + H2O. The protein operates within amino-acid biosynthesis; L-tryptophan biosynthesis; L-tryptophan from chorismate: step 5/5. Its function is as follows. The beta subunit is responsible for the synthesis of L-tryptophan from indole and L-serine. This chain is Tryptophan synthase beta chain, found in Bacillus cereus (strain ATCC 14579 / DSM 31 / CCUG 7414 / JCM 2152 / NBRC 15305 / NCIMB 9373 / NCTC 2599 / NRRL B-3711).